The sequence spans 177 residues: Large ribosomal subunit protein uL6 (177 aa).

It belongs to the universal ribosomal protein uL6 family. Part of the 50S ribosomal subunit.

This protein binds to the 23S rRNA, and is important in its secondary structure. It is located near the subunit interface in the base of the L7/L12 stalk, and near the tRNA binding site of the peptidyltransferase center. The polypeptide is Large ribosomal subunit protein uL6 (Azorhizobium caulinodans (strain ATCC 43989 / DSM 5975 / JCM 20966 / LMG 6465 / NBRC 14845 / NCIMB 13405 / ORS 571)).